We begin with the raw amino-acid sequence, 93 residues long: Small ribosomal subunit protein uS19 (93 aa).

This sequence belongs to the universal ribosomal protein uS19 family.

Its function is as follows. Protein S19 forms a complex with S13 that binds strongly to the 16S ribosomal RNA. In Leuconostoc citreum (strain KM20), this protein is Small ribosomal subunit protein uS19.